The primary structure comprises 1052 residues: Error-prone DNA polymerase (1052 aa).

The protein belongs to the DNA polymerase type-C family. DnaE2 subfamily.

Its subcellular location is the cytoplasm. The enzyme catalyses DNA(n) + a 2'-deoxyribonucleoside 5'-triphosphate = DNA(n+1) + diphosphate. In terms of biological role, DNA polymerase involved in damage-induced mutagenesis and translesion synthesis (TLS). It is not the major replicative DNA polymerase. The sequence is that of Error-prone DNA polymerase from Bordetella bronchiseptica (strain ATCC BAA-588 / NCTC 13252 / RB50) (Alcaligenes bronchisepticus).